The sequence spans 539 residues: MESSLFSPSSSSYSSLFTAKPTRLLSPKPKFTFSIRSSIEKPKPKLETNSSKSQSWVSPDWLTTLTRTLSSGKNDESGIPIANAKLDDVADLLGGALFLPLYKWMNEYGPIYRLAAGPRNFVIVSDPAIAKHVLRNYPKYAKGLVAEVSEFLFGSGFAIAEGPLWTARRRAVVPSLHRRYLSVIVERVFCKCAERLVEKLQPYAEDGSAVNMEAKFSQMTLDVIGLSLFNYNFDSLTTDSPVIEAVYTALKEAELRSTDLLPYWKIDALCKIVPRQVKAEKAVTLIRETVEDLIAKCKEIVEREGERINDEEYVNDADPSILRFLLASREEVSSVQLRDDLLSMLVAGHETTGSVLTWTLYLLSKNSSALRKAQEEVDRVLEGRNPAFEDIKELKYITRCINESMRLYPHPPVLIRRAQVPDILPGNYKVNTGQDIMISVYNIHRSSEVWEKAEEFLPERFDIDGAIPNETNTDFKFIPFSGGPRKCVGDQFALMEAIVALAVFLQRLNVELVPDQTISMTTGATIHTTNGLYMKVSQR.

A chloroplast-targeting transit peptide spans 1 to 36 (MESSLFSPSSSSYSSLFTAKPTRLLSPKPKFTFSIR). Cys-487 serves as a coordination point for heme.

Belongs to the cytochrome P450 family. It depends on heme as a cofactor.

It localises to the plastid. The protein localises to the chloroplast. It catalyses the reaction alpha-carotene + reduced [NADPH--hemoprotein reductase] + O2 = alpha-cryptoxanthin + oxidized [NADPH--hemoprotein reductase] + H2O + H(+). It carries out the reaction zeinoxanthin + reduced [NADPH--hemoprotein reductase] + O2 = lutein + oxidized [NADPH--hemoprotein reductase] + H2O + H(+). Heme-containing cytochrome P450 involved in the biosynthesis of xanthophylls. Specific for epsilon- and beta-ring hydroxylation of alpha-carotene. Has only a low activity toward the beta-rings of beta-carotene. The preferred substrate in planta is not alpha-carotene but the epsilon-ring of zeinoxanthin. Possesses a major beta-carotene hydroxylase activity in planta when depleted in its preferred substrate alpha-carotene. The protein is Carotene epsilon-monooxygenase, chloroplastic (CYP97C1) of Arabidopsis thaliana (Mouse-ear cress).